The primary structure comprises 1405 residues: DNA-directed RNA polymerase subunit beta' (1405 aa).

The Zn(2+) site is built by Cys-70, Cys-72, Cys-85, and Cys-88. Mg(2+) contacts are provided by Asp-460, Asp-462, and Asp-464. Residues Cys-815, Cys-889, Cys-896, and Cys-899 each coordinate Zn(2+). A disordered region spans residues Leu-1363 to Glu-1388.

Belongs to the RNA polymerase beta' chain family. As to quaternary structure, the RNAP catalytic core consists of 2 alpha, 1 beta, 1 beta' and 1 omega subunit. When a sigma factor is associated with the core the holoenzyme is formed, which can initiate transcription. Mg(2+) serves as cofactor. It depends on Zn(2+) as a cofactor.

The catalysed reaction is RNA(n) + a ribonucleoside 5'-triphosphate = RNA(n+1) + diphosphate. Functionally, DNA-dependent RNA polymerase catalyzes the transcription of DNA into RNA using the four ribonucleoside triphosphates as substrates. The sequence is that of DNA-directed RNA polymerase subunit beta' from Chromohalobacter salexigens (strain ATCC BAA-138 / DSM 3043 / CIP 106854 / NCIMB 13768 / 1H11).